Here is a 261-residue protein sequence, read N- to C-terminus: Carbonic anhydrase 1 (261 aa).

Ala-2 is modified (N-acetylalanine). Residues 4–261 (PDWGYDDKNG…LKGRTVRASF (258 aa)) form the Alpha-carbonic anhydrase domain. The active-site Proton donor/acceptor is His-65. Positions 95, 97, and 120 each coordinate Zn(2+). Residues Thr-200 and 200 to 201 (TH) each bind substrate. The interval 235-261 (EGDNPVPSQRNNRPTQPLKGRTVRASF) is disordered. Polar residues predominate over residues 240–249 (VPSQRNNRPT).

It belongs to the alpha-carbonic anhydrase family. Zn(2+) is required as a cofactor.

The protein resides in the cytoplasm. It carries out the reaction hydrogencarbonate + H(+) = CO2 + H2O. The catalysed reaction is urea = cyanamide + H2O. Inhibited by acetazolamide. Its function is as follows. Catalyzes the reversible hydration of carbon dioxide. Can hydrate cyanamide to urea. The chain is Carbonic anhydrase 1 (CA1) from Macaca nemestrina (Pig-tailed macaque).